Here is a 229-residue protein sequence, read N- to C-terminus: Ribosomal RNA small subunit methyltransferase G (229 aa).

Residues glycine 71, 122-123 (AE), and arginine 139 contribute to the S-adenosyl-L-methionine site.

The protein belongs to the methyltransferase superfamily. RNA methyltransferase RsmG family.

The protein resides in the cytoplasm. In terms of biological role, specifically methylates the N7 position of a guanine in 16S rRNA. This is Ribosomal RNA small subunit methyltransferase G from Thermotoga neapolitana (strain ATCC 49049 / DSM 4359 / NBRC 107923 / NS-E).